The primary structure comprises 565 residues: Efflux pump aunC (565 aa).

Over residues 1-14 (MSDTARISGGSFTS) the composition is skewed to polar residues. The interval 1–57 (MSDTARISGGSFTSPPGRDVELNSFKEASQTRLYPYSSRKEEEGREDEQQRPEREED) is disordered. Positions 38 to 54 (SRKEEEGREDEQQRPER) are enriched in basic and acidic residues. 14 helical membrane passes run 59-79 (GALT…CIFC), 103-123 (DVGW…LPFG), 128-148 (FFPI…GSFI), 164-184 (VAGL…TQCV), 194-214 (GFIM…GGAF), 222-242 (WCFY…FFTF), 257-277 (AAGL…CLLL), 293-313 (IIAL…LQLW), 335-355 (LYGF…PIWF), 378-398 (VIFA…GPFM), 399-419 (LLSA…HPSS), 425-445 (IGYQ…PVFV), 457-477 (TATA…VSVA), and 530-550 (VHTF…ATVI).

This sequence belongs to the major facilitator superfamily. TCR/Tet family.

It localises to the cell membrane. Functionally, efflux pump; part of the gene cluster that mediates the biosynthesis of aurasperone B, a dimeric gamma-naphthopyrone. This is Efflux pump aunC from Aspergillus niger (strain ATCC MYA-4892 / CBS 513.88 / FGSC A1513).